The sequence spans 73 residues: uncharacterized protein (73 aa).

A coiled-coil region spans residues 20–49 (NATYNKNLELEKRLAKIRNEIPNKSKLIAT).

This is an uncharacterized protein from Acheta domesticus (House cricket).